The following is a 180-amino-acid chain: Small ribosomal subunit protein uS5 (180 aa).

One can recognise an S5 DRBM domain in the interval 24 to 87 (MIEKLVAVNR…EQARKNLATV (64 aa)).

It belongs to the universal ribosomal protein uS5 family. Part of the 30S ribosomal subunit. Contacts proteins S4 and S8.

With S4 and S12 plays an important role in translational accuracy. In terms of biological role, located at the back of the 30S subunit body where it stabilizes the conformation of the head with respect to the body. This is Small ribosomal subunit protein uS5 from Xanthomonas axonopodis pv. citri (strain 306).